The following is a 351-amino-acid chain: Protein RecA (351 aa).

Residue glycine 68 to threonine 75 participates in ATP binding.

This sequence belongs to the RecA family.

It is found in the cytoplasm. Functionally, can catalyze the hydrolysis of ATP in the presence of single-stranded DNA, the ATP-dependent uptake of single-stranded DNA by duplex DNA, and the ATP-dependent hybridization of homologous single-stranded DNAs. It interacts with LexA causing its activation and leading to its autocatalytic cleavage. The protein is Protein RecA of Chloroflexus aurantiacus (strain ATCC 29364 / DSM 637 / Y-400-fl).